We begin with the raw amino-acid sequence, 452 residues long: Deoxybrevianamide E synthase notF (452 aa).

The span at 1 to 19 shows a compositional bias: basic and acidic residues; that stretch reads MTAPELRVDTFRAPEDAPK. Residues 1 to 38 form a disordered region; the sequence is MTAPELRVDTFRAPEDAPKEPSAQQPRLPSSPSPAQAL. Low complexity predominate over residues 21–38; sequence PSAQQPRLPSSPSPAQAL. Glu108 provides a ligand contact to brevianamide F. 8 residues coordinate dimethylallyl diphosphate: Arg122, Lys212, Tyr214, Lys282, Tyr284, Tyr371, Tyr436, and Tyr440.

This sequence belongs to the tryptophan dimethylallyltransferase family. As to quaternary structure, monomer.

The enzyme catalyses brevianamide F + dimethylallyl diphosphate = deoxybrevianamide E + diphosphate. The protein operates within alkaloid biosynthesis. Its activity is regulated as follows. Addition of 5 mM Mg(2+), Ca(2+) or Mn(2+) slightly enhances catalysis (about 100-120%). Significant reduction of enzyme activity (2%-35%) is observed with Cu(2+), Zn(2+), Fe(2+), or Sn(2+) (5 mM). Its function is as follows. Deoxybrevianamide E synthase; part of the gene cluster that mediates the biosynthesis of notoamide, a fungal indole alkaloid that belongs to a family of natural products containing a characteristic bicyclo[2.2.2]diazaoctane core. The first step of notoamide biosynthesis involves coupling of L-proline and L-tryptophan by the bimodular NRPS notE, to produce cyclo-L-tryptophan-L-proline called brevianamide F. The reverse prenyltransferase notF then acts as a deoxybrevianamide E synthase and converts brevianamide F to deoxybrevianamide E via reverse prenylation at C-2 of the indole ring leading to the bicyclo[2.2.2]diazaoctane core. Deoxybrevianamide E is further hydroxylated at C-6 of the indole ring, likely catalyzed by the cytochrome P450 monooxygenase notG, to yield 6-hydroxy-deoxybrevianamide E. 6-hydroxy-deoxybrevianamide E is a specific substrate of the prenyltransferase notC for normal prenylation at C-7 to produce 6-hydroxy-7-prenyl-deoxybrevianamide, also called notoamide S. As the proposed pivotal branching point in notoamide biosynthesis, notoamide S can be diverted to notoamide E through an oxidative pyran ring closure putatively catalyzed by either notH cytochrome P450 monooxygenase or the notD FAD-linked oxidoreductase. This step would be followed by an indole 2,3-epoxidation-initiated pinacol-like rearrangement catalyzed by the notB FAD-dependent monooxygenase leading to the formation of notoamide C and notoamide D. On the other hand notoamide S is converted to notoamide T by notH (or notD), a bifunctional oxidase that also functions as the intramolecular Diels-Alderase responsible for generation of (+)-notoamide T. To generate antipodal (-)-notoaminide T, notH' (or notD') in Aspergillus versicolor is expected to catalyze a Diels-Alder reaction leading to the opposite stereochemistry. The remaining oxidoreductase notD (or notH) likely catalyzes the oxidative pyran ring formation to yield (+)-stephacidin A. The FAD-dependent monooxygenase notI is highly similar to notB and is predicted to catalyze a similar conversion from (+)-stephacidin A to (-)-notoamide B via the 2,3-epoxidation of (+)-stephacidin A followed by a pinacol-type rearrangement. Finally, it remains unclear which enzyme could be responsible for the final hydroxylation steps leading to notoamide A and sclerotiamide. The protein is Deoxybrevianamide E synthase notF of Aspergillus sp. (strain MF297-2).